Consider the following 266-residue polypeptide: Urease accessory protein UreD (266 aa).

The protein belongs to the UreD family. As to quaternary structure, ureD, UreF and UreG form a complex that acts as a GTP-hydrolysis-dependent molecular chaperone, activating the urease apoprotein by helping to assemble the nickel containing metallocenter of UreC. The UreE protein probably delivers the nickel.

Its subcellular location is the cytoplasm. Required for maturation of urease via the functional incorporation of the urease nickel metallocenter. This chain is Urease accessory protein UreD, found in Jannaschia sp. (strain CCS1).